A 156-amino-acid chain; its full sequence is Organelle RRM domain-containing protein 2, mitochondrial (156 aa).

Residues 1 to 28 constitute a mitochondrion transit peptide; that stretch reads MAMAMRLPAISRAVTEVASAPVGLRRLF. The RRM domain maps to 56–134; that stretch reads TNLFVSGLSK…WVIFAEYARP (79 aa). Ser-64 carries the phosphoserine modification. Residues 137–148 show a composition bias toward polar residues; that stretch reads QSQSYQPQNNMS. Positions 137-156 are disordered; that stretch reads QSQSYQPQNNMSRPPYYGNR.

Interacts with RBG3/ORRM3. Binds to RBG2/ORRM5.

The protein resides in the mitochondrion. Involved in C-to-U editing of mitochondrial RNA. Functions as minor mitochondrial editing factor. Controls 6 percent of the mitochondrial editing sites. In Arabidopsis thaliana (Mouse-ear cress), this protein is Organelle RRM domain-containing protein 2, mitochondrial.